The sequence spans 284 residues: D-tagatose-1,6-bisphosphate aldolase subunit GatY (284 aa).

Asp-82 functions as the Proton donor in the catalytic mechanism. Positions 83 and 180 each coordinate Zn(2+). Dihydroxyacetone phosphate is bound at residue Gly-181. His-208 contacts Zn(2+). Dihydroxyacetone phosphate contacts are provided by residues 209-211 (GAS) and 230-233 (NVAT).

Belongs to the class II fructose-bisphosphate aldolase family. TagBP aldolase GatY subfamily. As to quaternary structure, forms a complex with GatZ. Zn(2+) serves as cofactor.

It carries out the reaction D-tagatofuranose 1,6-bisphosphate = D-glyceraldehyde 3-phosphate + dihydroxyacetone phosphate. It participates in carbohydrate metabolism; D-tagatose 6-phosphate degradation; D-glyceraldehyde 3-phosphate and glycerone phosphate from D-tagatose 6-phosphate: step 2/2. Functionally, catalytic subunit of the tagatose-1,6-bisphosphate aldolase GatYZ, which catalyzes the reversible aldol condensation of dihydroxyacetone phosphate (DHAP or glycerone-phosphate) with glyceraldehyde 3-phosphate (G3P) to produce tagatose 1,6-bisphosphate (TBP). Requires GatZ subunit for full activity and stability. Is involved in the catabolism of galactitol. This is D-tagatose-1,6-bisphosphate aldolase subunit GatY from Escherichia coli O45:K1 (strain S88 / ExPEC).